A 436-amino-acid chain; its full sequence is Trigger factor (436 aa).

Positions 163–248 (GDRATIDFEG…VKKIEAAHLP (86 aa)) constitute a PPIase FKBP-type domain.

Belongs to the FKBP-type PPIase family. Tig subfamily.

It is found in the cytoplasm. It catalyses the reaction [protein]-peptidylproline (omega=180) = [protein]-peptidylproline (omega=0). Functionally, involved in protein export. Acts as a chaperone by maintaining the newly synthesized protein in an open conformation. Functions as a peptidyl-prolyl cis-trans isomerase. The protein is Trigger factor of Polaromonas sp. (strain JS666 / ATCC BAA-500).